Here is an 893-residue protein sequence, read N- to C-terminus: Dystroglycan 1 (893 aa).

An N-terminal signal peptide occupies residues 1-27; that stretch reads MSVDNWLLHPLWGQTFLLLLSVAVAQA. Positions 28–406 are required for laminin recognition; the sequence is HWPSEPSEAV…GQIRPTLTIP (379 aa). Positions 47–69 are O-glycosylated at one site; that stretch reads SMHSVLSDFQEAVPTVVGIPDGT. An N-linked (GlcNAc...) asparagine glycan is attached at asparagine 139. The cysteines at positions 180 and 262 are disulfide-linked. The interval 314–483 is mucin-like domain; it reads ATPTPVTAIG…PPTRIRTTTS (170 aa). O-linked (Man6P...) threonine glycosylation is found at threonine 315, threonine 317, and threonine 377. Positions 379–498 are disordered; that stretch reads TLGPIQPTRV…GEPNQRPELK (120 aa). Low complexity predominate over residues 409 to 445; it reads VEPTAVITPPTTTTKKPRVSTPKPATPSTDSSTTTTR. Residues 461-483 form an O-glycosylated at seven sites with GalNAc region; that stretch reads TTKAPITRLETASPPTRIRTTTS. The Peptidase S72 domain occupies 601-710; the sequence is KAPARFKARL…LSIAVTGSGS (110 aa). Asparagine 639, asparagine 647, and asparagine 659 each carry an N-linked (GlcNAc...) asparagine glycan. The Extracellular portion of the chain corresponds to 652–751; sequence SIVVEWTNNT…SSEDDVYLHT (100 aa). Cysteine 667 and cysteine 711 are joined by a disulfide. Positions 722-744 are disordered; the sequence is PSPGSSAAPATEVPDRDPEKSSE. A compositionally biased stretch (basic and acidic residues) spans 734 to 744; that stretch reads VPDRDPEKSSE. Residues 752–772 form a helical membrane-spanning segment; the sequence is VIPAVVVAAILLIAGIIAMIC. Topologically, residues 773–893 are cytoplasmic; it reads YRKKRKGKLT…YRSPPPYVPP (121 aa). A Nuclear localization signal motif is present at residues 774–780; sequence RKKRKGK. Position 788 is a phosphothreonine (threonine 788). The segment at 817–893 is required for interaction with CAV3; the sequence is LQEEKAPLPP…YRSPPPYVPP (77 aa). A disordered region spans residues 821-893; that stretch reads KAPLPPPEYP…YRSPPPYVPP (73 aa). Positions 830 to 844 are enriched in polar residues; it reads PNQSMPETTPLNQDT. Positions 857-868 are enriched in pro residues; that stretch reads NAPPYQPPPPFT. Residues 878–893 form a required for binding DMD and UTRN region; sequence PKNMTPYRSPPPYVPP. Residues 887-890 carry the PPXY motif motif; it reads PPPY. At tyrosine 890 the chain carries Phosphotyrosine; by SRC.

As to quaternary structure, monomer. Heterodimer of alpha- and beta-dystroglycan subunits which are the central components of the dystrophin-glycoprotein complex. This complex then can form a dystrophin-associated glycoprotein complex (DGC) which is composed of three subcomplexes: a cytoplasmic complex comprised of DMD (or UTRN), DTNA and a number of syntrophins, such as SNTB1, SNTB2, SNTG1 and SNTG2, the transmembrane dystroglycan complex, and the sarcoglycan-sarcospan complex. Interacts (via the N-terminal of alphaDAG1) with LARGE1; the interaction enhances laminin binding. Interacts with SGCD. Interacts with AGR2 and AGR3. Interacts (betaDAG1) with DMD; the interaction is inhibited by phosphorylation on the PPXY motif. Interacts (betaDAG1, via its PPXY motif) with UTRN (via its WWW and ZZ domains); the interaction is inhibited by phosphorylation on the PPXY motif. Interacts (betaDAG1, via its phosphorylated PPXY motif) with the SH2 domain-containing proteins, FYN, CSK, NCK and SHC. Interacts (betaDAG1) with CAV3 (via a central WW-like domain); the interaction disrupts the binding of DMD. BetaDAG1 directly interacts with ANK3, but not with ANK2; this interaction does not interfere with DMD-binding and is required for retention at costameres. Identified in a dystroglycan complex that contains at least PRX, DRP2, UTRN, DMD and DAG1. Interacts with POMGNT1. BetaDAG1 interacts with CD93. In terms of processing, O-glycosylated. POMGNT1 catalyzes the initial addition of N-acetylglucosamine, giving rise to the GlcNAc(beta1-2)Man(alpha1-)O-Ser/Thr moiety and thus providing the necessary basis for the addition of further carbohydrate moieties. Heavily O-glycosylated comprising of up to two thirds of its mass and the carbohydrate composition differs depending on tissue type. Mucin-type O-glycosylation is important for ligand binding activity. O-mannosylation is found in high abundance in both brain and muscle where the most abundant glycan is Sia-alpha-2-3-Gal-beta-1-4-Glc-NAc-beta-1-2-Man. In muscle, glycosylation on Thr-315, Thr-317, Thr-379 by a phosphorylated O-mannosyl glycan with the structure 2-(N-acetylamido)-2-deoxygalactosyl-beta-1,3-2-(N-acetylamido)-2-deoxyglucosyl-beta-1,4-6-phosphomannose is mediated by like-acetylglucosaminyltransferase (LARGE1) protein amd is required for laminin binding. O-glycosylated in the N-terminal region with a core 1 or possibly core 8 glycan. The brain form displays a unique glycosylation pattern which is absent in other tissues; this form shows enhanced binding to laminin LAMA5 compared to the skeletal muscle form. N-glycosylated. Post-translationally, autolytic cleavage produces the alpha and beta subunits. In cutaneous cells, as well as in certain pathological conditions, shedding of beta-dystroglycan can occur releasing a peptide of about 30 kDa. In terms of processing, SRC-mediated phosphorylation of the PPXY motif of the beta subunit recruits SH2 domain-containing proteins, but inhibits binding to WWW domain-containing proteins, DMD and UTRN. This phosphorylation also inhibits nuclear entry. As to expression, detected in brain and kidney (at protein level). Detected in sciatic nerve (at protein level). Expressed in neurons and muscle cells (at protein level). Expressed in a variety of tissues. In brain, expressed in the hippocampal formation, the olfactory bulb, the cerebellum and the thalamus. In the peripheral nerve system, expressed in Schwann cells.

The protein localises to the secreted. It localises to the extracellular space. The protein resides in the cell membrane. It is found in the cytoplasm. Its subcellular location is the cytoskeleton. The protein localises to the nucleus. It localises to the nucleoplasm. The protein resides in the sarcolemma. It is found in the postsynaptic cell membrane. Its function is as follows. The dystroglycan complex is involved in a number of processes including laminin and basement membrane assembly, sarcolemmal stability, cell survival, peripheral nerve myelination, nodal structure, cell migration, and epithelial polarization. In terms of biological role, extracellular peripheral glycoprotein that acts as a receptor for extracellular matrix proteins containing laminin-G domains, and for certain adenoviruses. Receptor for laminin-2 (LAMA2) and agrin in peripheral nerve Schwann cells. Also acts as a receptor for laminin LAMA5. Functionally, transmembrane protein that plays important roles in connecting the extracellular matrix to the cytoskeleton. Acts as a cell adhesion receptor in both muscle and non-muscle tissues. Receptor for both DMD and UTRN and, through these interactions, scaffolds axin to the cytoskeleton. Also functions in cell adhesion-mediated signaling and implicated in cell polarity. This Mus musculus (Mouse) protein is Dystroglycan 1.